Here is a 620-residue protein sequence, read N- to C-terminus: 1-deoxy-D-xylulose-5-phosphate synthase (620 aa).

Thiamine diphosphate contacts are provided by residues His-80 and Gly-121 to Ser-123. A Mg(2+)-binding site is contributed by Asp-152. Residues Gly-153 to Ala-154, Asn-181, Tyr-288, and Glu-370 each bind thiamine diphosphate. Asn-181 contributes to the Mg(2+) binding site.

It belongs to the transketolase family. DXPS subfamily. As to quaternary structure, homodimer. Mg(2+) is required as a cofactor. Thiamine diphosphate serves as cofactor.

It catalyses the reaction D-glyceraldehyde 3-phosphate + pyruvate + H(+) = 1-deoxy-D-xylulose 5-phosphate + CO2. The protein operates within metabolic intermediate biosynthesis; 1-deoxy-D-xylulose 5-phosphate biosynthesis; 1-deoxy-D-xylulose 5-phosphate from D-glyceraldehyde 3-phosphate and pyruvate: step 1/1. Functionally, catalyzes the acyloin condensation reaction between C atoms 2 and 3 of pyruvate and glyceraldehyde 3-phosphate to yield 1-deoxy-D-xylulose-5-phosphate (DXP). This chain is 1-deoxy-D-xylulose-5-phosphate synthase, found in Sodalis glossinidius (strain morsitans).